Consider the following 265-residue polypeptide: Palmitoyltransferase ZDHHC21 (265 aa).

At 1 to 16 the chain is on the cytoplasmic side; that stretch reads MGLRIHFVVDPHGWCC. The helical transmembrane segment at 17-37 threads the bilayer; the sequence is MGLIVFVWLYNIVLIPKIVLF. Over 38 to 44 the chain is Extracellular; it reads PHYEEGH. The helical transmembrane segment at 45–65 threads the bilayer; it reads IPGILIIIFYGISIFCLVALV. At 66–133 the chain is on the cytoplasmic side; the sequence is RASITDPGRL…NNCVGEDNHW (68 aa). The DHHC domain maps to 90 to 140; that stretch reads ELCNKCNLMRPKRSHHCSRCGHCVRRMDHHCPWINNCVGEDNHWLFLQLCF. The active-site S-palmitoyl cysteine intermediate is Cys-120. Residues 134–154 form a helical membrane-spanning segment; sequence LFLQLCFYTELLTCYALMFSF. Residues 155 to 185 are Extracellular-facing; the sequence is CHYYYFLPLKKRNLDLFVFRHELAIMRLAAF. A helical membrane pass occupies residues 186-206; the sequence is MGITMLVGITGLFYTQLIGII. The Cytoplasmic segment spans residues 207–265; it reads TDTTSIEKMSNCCEDISRPRKPWQQTFSEVFGTRWKILWFIPFRQRQPLRVPYHFANHV.

It belongs to the DHHC palmitoyltransferase family. As to expression, widely expressed.

Its subcellular location is the golgi apparatus membrane. It is found in the golgi apparatus. The protein localises to the cis-Golgi network membrane. The protein resides in the cell membrane. It carries out the reaction L-cysteinyl-[protein] + hexadecanoyl-CoA = S-hexadecanoyl-L-cysteinyl-[protein] + CoA. In terms of biological role, palmitoyltransferase that catalyzes the addition of palmitate onto various protein substrates. Palmitoylates sex steroid hormone receptors, including ESR1, PGR and AR, thereby regulating their targeting to the plasma membrane. This affects rapid intracellular signaling by sex hormones via ERK and AKT kinases and the generation of cAMP, but does not affect that mediated by their nuclear receptor. Palmitoylates FYN, regulates its localization in hair follicles and plays a key role in epidermal homeostasis and hair follicle differentiation. Through the palmitoylation of PLCB1 and the regulation of PLCB1 downstream signaling may indirectly regulate the function of the endothelial barrier and the adhesion of leukocytes to the endothelium. Also has a palmitoyltransferase activity toward ADRA1D, positively regulating its activity and expression and may thereby play a role in vascular contraction. May also palmitoylate eNOS and LCK. The polypeptide is Palmitoyltransferase ZDHHC21 (Homo sapiens (Human)).